An 879-amino-acid polypeptide reads, in one-letter code: Phosphoenolpyruvate carboxylase (879 aa).

Active-site residues include histidine 138 and lysine 545.

It belongs to the PEPCase type 1 family. Mg(2+) is required as a cofactor.

It carries out the reaction oxaloacetate + phosphate = phosphoenolpyruvate + hydrogencarbonate. Forms oxaloacetate, a four-carbon dicarboxylic acid source for the tricarboxylic acid cycle. This chain is Phosphoenolpyruvate carboxylase, found in Actinobacillus pleuropneumoniae serotype 5b (strain L20).